The primary structure comprises 569 residues: Cryptochrome DASH, chloroplastic/mitochondrial (569 aa).

The Photolyase/cryptochrome alpha/beta domain occupies 84–221 (GVTILWFRND…KLELIWGSTM (138 aa)). Residues Tyr316 and 329 to 333 (STKFS) each bind FAD. Arg436 serves as a coordination point for ATP. FAD is bound by residues Asp466 and Asp468. ATP is bound at residue Asp485. The tract at residues 541-569 (GNGPMAGGSKSGGGFRGSHSGRRSRHNGP) is disordered. Gly residues predominate over residues 544-556 (PMAGGSKSGGGFR). Basic residues predominate over residues 559–569 (HSGRRSRHNGP).

Belongs to the DNA photolyase class-1 family. As to quaternary structure, homodimer. FAD serves as cofactor. The cofactor is (6R)-5,10-methylene-5,6,7,8-tetrahydrofolate.

The protein localises to the plastid. It localises to the chloroplast. It is found in the mitochondrion. In terms of biological role, may have a photoreceptor function. Binds ss- and ds-DNA in a sequence non-specific manner. Has a photolyase activity specific for cyclobutane pyrimidine dimers in ssDNA. The chain is Cryptochrome DASH, chloroplastic/mitochondrial (CRYD) from Arabidopsis thaliana (Mouse-ear cress).